Reading from the N-terminus, the 378-residue chain is 3-dehydroquinate synthase (378 aa).

Residues 115 to 119 (GVVGD), 139 to 140 (TS), lysine 152, and lysine 161 each bind NAD(+). Zn(2+) is bound by residues glutamate 194, histidine 256, and histidine 275.

This sequence belongs to the sugar phosphate cyclases superfamily. Dehydroquinate synthase family. The cofactor is Co(2+). Zn(2+) serves as cofactor. NAD(+) is required as a cofactor.

It localises to the cytoplasm. The enzyme catalyses 7-phospho-2-dehydro-3-deoxy-D-arabino-heptonate = 3-dehydroquinate + phosphate. It participates in metabolic intermediate biosynthesis; chorismate biosynthesis; chorismate from D-erythrose 4-phosphate and phosphoenolpyruvate: step 2/7. Functionally, catalyzes the conversion of 3-deoxy-D-arabino-heptulosonate 7-phosphate (DAHP) to dehydroquinate (DHQ). The chain is 3-dehydroquinate synthase from Brucella canis (strain ATCC 23365 / NCTC 10854 / RM-666).